A 279-amino-acid chain; its full sequence is MAFQGTSRTLTQQSSAATSDELQKILFSPDAIKKMAAECDLGRHHWMRADNAISVRPLVPEVTHGRIASFFKSGYDAGELCSKGYMSVPQVLCAVTRTVSTDAEGSLRIYLADLGDKELSPIDKQCVTLHNHDLPALVSFQPTYDCPMETVGNRKRCFAVVVERHGYVGYTGTTASVCSNWQARFSSKNNNYTHIAAGKTLVLPFNRLAEQTKPSAVARLLKSQLNNIESSQYVLTDSKINQNARSESEELNVESPPVAIGSSSASRFESFRPQVVNGL.

The protein belongs to the cucumovirus movement protein family.

It is found in the host cell junction. The protein localises to the host plasmodesma. Transports viral genome to neighboring plant cells directly through plasmosdesmata, without any budding. The movement protein allows efficient cell to cell propagation, by bypassing the host cell wall barrier. Acts by forming a tubular structure at the host plasmodesmata, enlarging it enough to allow free passage of virion capsids. This chain is Movement protein, found in Cucumis sativus (Cucumber).